The sequence spans 142 residues: Protein archease (142 aa).

3 residues coordinate Ca(2+): Asp-12, Asp-141, and Ile-142.

The protein belongs to the archease family. In solution, exists as a monomer, trimer and hexamer. Oligomeric states form a tripartite complex with tRNA and PAB1947 methyltransferase.

Functionally, activates the tRNA-splicing ligase complex by facilitating the enzymatic turnover of catalytic subunit RtcB. Acts by promoting the guanylylation of RtcB, a key intermediate step in tRNA ligation. Can also alter the NTP specificity of RtcB such that ATP, dGTP or ITP is used efficiently. Chaperone or modulator of proteins involved in DNA or RNA processing. Protects the tRNA (cytosine-5-)-methyltransferase PAB1947 against aggregation and increases its specificity. This Pyrococcus abyssi (strain GE5 / Orsay) protein is Protein archease.